Consider the following 259-residue polypeptide: MLRKVFAVVSVLLVVSAAKVTKLVLDDNYVNRVVGGEVAKNGSAPYQVSLQVPGWGHNCGGSLLNDRWVLTAAHCLVGHAPGDLMVLVGTNSLKEGGELLKVDKLLYHSRYNLPRFHNDIGLVRLEQPVRFSELVQSVEYSEKAVPANATVRLTGWGHTSANGPSPTLLQSLNVVTLSNEDCNKKGGDPGYTDVGHLCTLTKTGEGACNGDSGGPLVYEGKLVGVVNFGVPCALGYPDGFARVSYYHDWVRTTMANNSK.

The N-terminal stretch at 1–17 (MLRKVFAVVSVLLVVSA) is a signal peptide. A propeptide spans 18–32 (AKVTKLVLDDNYVNR) (activation peptide). A Peptidase S1 domain is found at 33 to 255 (VVGGEVAKNG…YHDWVRTTMA (223 aa)). An intrachain disulfide couples Cys-59 to Cys-75. Active-site charge relay system residues include His-74 and Asp-119. Disulfide bonds link Cys-182–Cys-198 and Cys-208–Cys-232. Catalysis depends on Ser-212, which acts as the Charge relay system.

The protein belongs to the peptidase S1 family. After blood feeding, expression is induced in the midgut epithelium, followed by secretion into the midgut lumen.

It is found in the secreted. The catalysed reaction is Preferential cleavage: Tyr-|-Xaa, Trp-|-Xaa, Phe-|-Xaa, Leu-|-Xaa.. The chain is Chymotrypsin-1 (CHYM1) from Anopheles gambiae (African malaria mosquito).